Consider the following 402-residue polypeptide: Imidazolonepropionase (402 aa).

2 residues coordinate Fe(3+): His66 and His68. His66 and His68 together coordinate Zn(2+). Arg75, Tyr138, and His171 together coordinate 4-imidazolone-5-propanoate. Tyr138 is an N-formimidoyl-L-glutamate binding site. His236 is a Fe(3+) binding site. Residue His236 coordinates Zn(2+). Gln239 lines the 4-imidazolone-5-propanoate pocket. Asp311 contacts Fe(3+). Asp311 lines the Zn(2+) pocket. N-formimidoyl-L-glutamate is bound by residues Asn313 and Gly315. Thr316 serves as a coordination point for 4-imidazolone-5-propanoate.

This sequence belongs to the metallo-dependent hydrolases superfamily. HutI family. Requires Zn(2+) as cofactor. Fe(3+) serves as cofactor.

The protein localises to the cytoplasm. The catalysed reaction is 4-imidazolone-5-propanoate + H2O = N-formimidoyl-L-glutamate. The protein operates within amino-acid degradation; L-histidine degradation into L-glutamate; N-formimidoyl-L-glutamate from L-histidine: step 3/3. Catalyzes the hydrolytic cleavage of the carbon-nitrogen bond in imidazolone-5-propanoate to yield N-formimidoyl-L-glutamate. It is the third step in the universal histidine degradation pathway. The polypeptide is Imidazolonepropionase (Pseudomonas paraeruginosa (strain DSM 24068 / PA7) (Pseudomonas aeruginosa (strain PA7))).